A 270-amino-acid chain; its full sequence is MKLVVVGVSGRMGQALVRIICETQGAVLHAAVGRPGSASIGRDAGDLAGVGPLGVPVTDDALAAFVNADGVIDFTRPETSVEFSALAAQARIVHIIGTTGCSPADEARFEAAARHARIVKSGNMSLGVNLLSVLVAQAAKALEASGWDIEVLEMHHKHKVDAPSGTALLLGEAAAKGRGIDLTEKAVKVRDGHTGPREPGSIGFATLRGGSVIGEHSVLLAGEGEIVTLSHSAGDRSIFARGAVKAALWAQDKKPGLYSMLDVLGLSSPH.

NAD(+) is bound at residue 7–12 (GVSGRM). R34 is an NADP(+) binding site. NAD(+)-binding positions include 97-99 (GTT) and 121-124 (SGNM). Catalysis depends on H155, which acts as the Proton donor/acceptor. H156 contacts (S)-2,3,4,5-tetrahydrodipicolinate. The active-site Proton donor is K159. 165-166 (GT) lines the (S)-2,3,4,5-tetrahydrodipicolinate pocket.

It belongs to the DapB family.

It is found in the cytoplasm. It catalyses the reaction (S)-2,3,4,5-tetrahydrodipicolinate + NAD(+) + H2O = (2S,4S)-4-hydroxy-2,3,4,5-tetrahydrodipicolinate + NADH + H(+). The enzyme catalyses (S)-2,3,4,5-tetrahydrodipicolinate + NADP(+) + H2O = (2S,4S)-4-hydroxy-2,3,4,5-tetrahydrodipicolinate + NADPH + H(+). The protein operates within amino-acid biosynthesis; L-lysine biosynthesis via DAP pathway; (S)-tetrahydrodipicolinate from L-aspartate: step 4/4. Functionally, catalyzes the conversion of 4-hydroxy-tetrahydrodipicolinate (HTPA) to tetrahydrodipicolinate. The chain is 4-hydroxy-tetrahydrodipicolinate reductase from Allorhizobium ampelinum (strain ATCC BAA-846 / DSM 112012 / S4) (Agrobacterium vitis (strain S4)).